Here is a 150-residue protein sequence, read N- to C-terminus: Arginine repressor (150 aa).

It belongs to the ArgR family.

The protein resides in the cytoplasm. It functions in the pathway amino-acid biosynthesis; L-arginine biosynthesis [regulation]. Functionally, regulates arginine biosynthesis genes. The sequence is that of Arginine repressor from Staphylococcus saprophyticus subsp. saprophyticus (strain ATCC 15305 / DSM 20229 / NCIMB 8711 / NCTC 7292 / S-41).